The primary structure comprises 420 residues: MSQEATIIAVDNSDYMRNGDFFPTRLQAQNDAVGLICQSKRQRNPENTIGLLSLANTEVLCTLTNDVSKIYNRLHLVEPKGRIIFCSSIRIAHLALRHRQLRHQKMRIVCFIGSPILEDEKELTRLAKRLKKEKVNVDIINFGENETNEQKLSEFIDTLNGKDGTGSHLISVAPGTVLHDTLMTSPVVAGEDGSGMAGAGLGLEFGLDGAEDPDLLYALRVSMEDQRMRQEHEVNGDGSNTSVVATSLPAGSGTSEEAMLQQALAMSMQMNNTESSSLPMDIDLAAMSEEDQIAYALRMSLQQMGEETTQPTTTTLESDKTIVEPSGVAMDIDQTPTKVTENPNLSSSSGTLAAATSAVPTSADLDVMYDAEFLESVLQSLPGVDTQNEDVRKAINALTKSQSQRGSKKDEKEDEDKQNS.

The region spanning 1 to 174 is the VWFA domain; sequence MSQEATIIAV…TGSHLISVAP (174 aa). 3 consecutive UIM domains span residues 210-229, 255-274, and 288-307; these read AEDPDLLYALRVSMEDQRMR, SEEAMLQQALAMSMQMNNTE, and SEEDQIAYALRMSLQQMGEE. The tract at residues 392–420 is disordered; that stretch reads RKAINALTKSQSQRGSKKDEKEDEDKQNS. The span at 407–420 shows a compositional bias: basic and acidic residues; it reads SKKDEKEDEDKQNS.

Belongs to the proteasome subunit S5A family. As to quaternary structure, the 26S proteasome is composed of a core protease, known as the 20S proteasome, capped at one or both ends by the 19S regulatory complex (RC). The RC is composed of at least 18 different subunits in two subcomplexes, the base and the lid, which form the portions proximal and distal to the 20S proteolytic core, respectively.

Binds and presumably selects ubiquitin-conjugates for destruction. This chain is 26S proteasome non-ATPase regulatory subunit 4, found in Schistosoma mansoni (Blood fluke).